Consider the following 189-residue polypeptide: ATP synthase subunit b 1 (189 aa).

The helical transmembrane segment at 32–52 (TYFASQLFWLTIAFVILYIAL) threads the bilayer.

It belongs to the ATPase B chain family. F-type ATPases have 2 components, F(1) - the catalytic core - and F(0) - the membrane proton channel. F(1) has five subunits: alpha(3), beta(3), gamma(1), delta(1), epsilon(1). F(0) has three main subunits: a(1), b(2) and c(10-14). The alpha and beta chains form an alternating ring which encloses part of the gamma chain. F(1) is attached to F(0) by a central stalk formed by the gamma and epsilon chains, while a peripheral stalk is formed by the delta and b chains.

It is found in the cell inner membrane. In terms of biological role, f(1)F(0) ATP synthase produces ATP from ADP in the presence of a proton or sodium gradient. F-type ATPases consist of two structural domains, F(1) containing the extramembraneous catalytic core and F(0) containing the membrane proton channel, linked together by a central stalk and a peripheral stalk. During catalysis, ATP synthesis in the catalytic domain of F(1) is coupled via a rotary mechanism of the central stalk subunits to proton translocation. Component of the F(0) channel, it forms part of the peripheral stalk, linking F(1) to F(0). The protein is ATP synthase subunit b 1 of Maricaulis maris (strain MCS10) (Caulobacter maris).